Reading from the N-terminus, the 189-residue chain is Frataxin-like protein, mitochondrial (189 aa).

Residues 1–50 (MNCARLHQRIPLRAMALTTTSYPALAPSHSFANASTSVMTASAMAVAHRA) constitute a mitochondrion transit peptide.

The protein belongs to the frataxin family. In terms of assembly, interacts with IscU; the interaction is direct.

Its subcellular location is the mitochondrion. It carries out the reaction 4 Fe(2+) + O2 + 4 H(+) = 4 Fe(3+) + 2 H2O. Its function is as follows. Iron-binding protein which binds 2 iron atoms per monomer. Probably, acts as an iron carrier for the biosynthesis of Fe-S clusters. Stimulates the cysteine desulphurase activity of IscS in the presence of IscU. This Leishmania donovani protein is Frataxin-like protein, mitochondrial.